Reading from the N-terminus, the 238-residue chain is Ribosomal RNA small subunit methyltransferase G (238 aa).

S-adenosyl-L-methionine is bound by residues G77, F82, 128 to 129 (AE), and R147.

It belongs to the methyltransferase superfamily. RNA methyltransferase RsmG family.

The protein localises to the cytoplasm. Specifically methylates the N7 position of guanine in position 535 of 16S rRNA. This is Ribosomal RNA small subunit methyltransferase G from Listeria innocua serovar 6a (strain ATCC BAA-680 / CLIP 11262).